The following is a 491-amino-acid chain: Ketol-acid reductoisomerase (NADP(+)) (491 aa).

Residues 15 to 208 (AQLGKCRFMG…GGHRAGVLES (194 aa)) enclose the KARI N-terminal Rossmann domain. Residues 45–48 (CGAQ), arginine 68, arginine 76, serine 78, and 108–110 (DKQ) contribute to the NADP(+) site. Residue histidine 132 is part of the active site. NADP(+) is bound at residue glycine 158. KARI C-terminal knotted domains are found at residues 209-344 (SFVA…TAPQ) and 345-484 (YEGK…MTDM). Aspartate 217, glutamate 221, glutamate 389, and glutamate 393 together coordinate Mg(2+). Substrate is bound at residue serine 414.

Belongs to the ketol-acid reductoisomerase family. The cofactor is Mg(2+).

The catalysed reaction is (2R)-2,3-dihydroxy-3-methylbutanoate + NADP(+) = (2S)-2-acetolactate + NADPH + H(+). It carries out the reaction (2R,3R)-2,3-dihydroxy-3-methylpentanoate + NADP(+) = (S)-2-ethyl-2-hydroxy-3-oxobutanoate + NADPH + H(+). The protein operates within amino-acid biosynthesis; L-isoleucine biosynthesis; L-isoleucine from 2-oxobutanoate: step 2/4. Its pathway is amino-acid biosynthesis; L-valine biosynthesis; L-valine from pyruvate: step 2/4. Functionally, involved in the biosynthesis of branched-chain amino acids (BCAA). Catalyzes an alkyl-migration followed by a ketol-acid reduction of (S)-2-acetolactate (S2AL) to yield (R)-2,3-dihydroxy-isovalerate. In the isomerase reaction, S2AL is rearranged via a Mg-dependent methyl migration to produce 3-hydroxy-3-methyl-2-ketobutyrate (HMKB). In the reductase reaction, this 2-ketoacid undergoes a metal-dependent reduction by NADPH to yield (R)-2,3-dihydroxy-isovalerate. The chain is Ketol-acid reductoisomerase (NADP(+)) from Salmonella arizonae (strain ATCC BAA-731 / CDC346-86 / RSK2980).